The sequence spans 296 residues: MIYLHAIDPIAFSLGPVQVHWYGLMYLAAFFSAWALGRSRILRGRLPGVDMDGFSDLLFYGMLGVVLGGRIGYMLFYAFDTFLANPLILFKVWEGGMSFHGGLLGVLIACGLWTRRHRLHFFDVMDFVAPLVPLGLGFGRLGNFVGGELWGKFTQAGWGVIFPHAPELADWPPAQLQAQYAAGALDRFARHPSQLYEAALEGVVMFVVLWTFSMKPRARYAVSGLFALLYGVFRFIVEFVRVPDAPLGYLAFNWLTMGQILSLPLIGVGLVLLALSRRAPVLQPVVPAAAGVEAAK.

The next 4 helical transmembrane spans lie at 10–30 (IAFSLGPVQVHWYGLMYLAAF), 57–77 (LLFYGMLGVVLGGRIGYMLFY), 92–112 (VWEGGMSFHGGLLGVLIACGL), and 119–139 (LHFFDVMDFVAPLVPLGLGFG). Arginine 140 lines the a 1,2-diacyl-sn-glycero-3-phospho-(1'-sn-glycerol) pocket. Helical transmembrane passes span 194-214 (QLYEAALEGVVMFVVLWTFSM), 220-240 (YAVSGLFALLYGVFRFIVEFV), and 255-275 (LTMGQILSLPLIGVGLVLLAL).

This sequence belongs to the Lgt family.

It is found in the cell inner membrane. The enzyme catalyses L-cysteinyl-[prolipoprotein] + a 1,2-diacyl-sn-glycero-3-phospho-(1'-sn-glycerol) = an S-1,2-diacyl-sn-glyceryl-L-cysteinyl-[prolipoprotein] + sn-glycerol 1-phosphate + H(+). It participates in protein modification; lipoprotein biosynthesis (diacylglyceryl transfer). Catalyzes the transfer of the diacylglyceryl group from phosphatidylglycerol to the sulfhydryl group of the N-terminal cysteine of a prolipoprotein, the first step in the formation of mature lipoproteins. The protein is Phosphatidylglycerol--prolipoprotein diacylglyceryl transferase of Xanthomonas campestris pv. campestris (strain 8004).